Here is a 263-residue protein sequence, read N- to C-terminus: Phosphonoacetaldehyde hydrolase (263 aa).

The active-site Nucleophile is D10. Residues D10 and A12 each contribute to the Mg(2+) site. K51 acts as the Schiff-base intermediate with substrate in catalysis. D184 contributes to the Mg(2+) binding site.

This sequence belongs to the HAD-like hydrolase superfamily. PhnX family. As to quaternary structure, homodimer. It depends on Mg(2+) as a cofactor.

The enzyme catalyses phosphonoacetaldehyde + H2O = acetaldehyde + phosphate + H(+). In terms of biological role, involved in phosphonate degradation. The sequence is that of Phosphonoacetaldehyde hydrolase from Bacteroides fragilis (strain ATCC 25285 / DSM 2151 / CCUG 4856 / JCM 11019 / LMG 10263 / NCTC 9343 / Onslow / VPI 2553 / EN-2).